Consider the following 1286-residue polypeptide: Structural maintenance of chromosomes protein 4 (1286 aa).

The disordered stretch occupies residues 1–51 (MRRKGTKPSTACHQEEGPPPSQDGAHSDEEMEQPAGEAESAAPAKPPGEEL). S21, S27, and S40 each carry phosphoserine. Residue 111–118 (GPNGSGKS) participates in ATP binding. S141 carries the phosphoserine modification. A coiled-coil region spans residues 270 to 589 (RRVEILNEHR…KVEEAKSSLA (320 aa)). An N6-acetyllysine mark is found at K379 and K677. The 115-residue stretch at 611 to 725 (PGIYGRLGDL…ANNLDQATRV (115 aa)) folds into the SMC hinge domain. Coiled coils occupy residues 768-1018 (EISV…KLEQ) and 1068-1133 (ESIT…LNEF). S980 carries the phosphoserine modification.

This sequence belongs to the SMC family. SMC4 subfamily. In terms of assembly, forms a heterodimer with SMC2. Component of the condensin complex, which contains the SMC2 and SMC4 heterodimer, and three non SMC subunits that probably regulate the complex: BRRN1/CAPH, CNAP1/CAPD2 and CAPG.

Its subcellular location is the nucleus. It localises to the cytoplasm. It is found in the chromosome. In terms of biological role, central component of the condensin complex, a complex required for conversion of interphase chromatin into mitotic-like condense chromosomes. The condensin complex probably introduces positive supercoils into relaxed DNA in the presence of type I topoisomerases and converts nicked DNA into positive knotted forms in the presence of type II topoisomerases. This Mus musculus (Mouse) protein is Structural maintenance of chromosomes protein 4 (Smc4).